The following is a 63-amino-acid chain: Translational regulator CsrA (63 aa).

Belongs to the CsrA/RsmA family. As to quaternary structure, homodimer; the beta-strands of each monomer intercalate to form a hydrophobic core, while the alpha-helices form wings that extend away from the core.

It is found in the cytoplasm. In terms of biological role, a key translational regulator that binds mRNA to regulate translation initiation and/or mRNA stability. Mediates global changes in gene expression, shifting from rapid growth to stress survival by linking envelope stress, the stringent response and the catabolite repression systems. Usually binds in the 5'-UTR; binding at or near the Shine-Dalgarno sequence prevents ribosome-binding, repressing translation, binding elsewhere in the 5'-UTR can activate translation and/or stabilize the mRNA. Its function is antagonized by small RNA(s). In Haemophilus influenzae (strain 86-028NP), this protein is Translational regulator CsrA.